The primary structure comprises 492 residues: Aspartyl/glutamyl-tRNA(Asn/Gln) amidotransferase subunit B (492 aa).

Belongs to the GatB/GatE family. GatB subfamily. Heterotrimer of A, B and C subunits.

The enzyme catalyses L-glutamyl-tRNA(Gln) + L-glutamine + ATP + H2O = L-glutaminyl-tRNA(Gln) + L-glutamate + ADP + phosphate + H(+). It catalyses the reaction L-aspartyl-tRNA(Asn) + L-glutamine + ATP + H2O = L-asparaginyl-tRNA(Asn) + L-glutamate + ADP + phosphate + 2 H(+). Its function is as follows. Allows the formation of correctly charged Asn-tRNA(Asn) or Gln-tRNA(Gln) through the transamidation of misacylated Asp-tRNA(Asn) or Glu-tRNA(Gln) in organisms which lack either or both of asparaginyl-tRNA or glutaminyl-tRNA synthetases. The reaction takes place in the presence of glutamine and ATP through an activated phospho-Asp-tRNA(Asn) or phospho-Glu-tRNA(Gln). The chain is Aspartyl/glutamyl-tRNA(Asn/Gln) amidotransferase subunit B from Dehalococcoides mccartyi (strain ATCC BAA-2266 / KCTC 15142 / 195) (Dehalococcoides ethenogenes (strain 195)).